Here is a 1488-residue protein sequence, read N- to C-terminus: MIERGKFRSLTLINWNGFFARTFDLDELVTTLSGGNGAGKSTTMAAFVTALIPDLTLLHFRNTTEAGATSGSRDKGLHGKLKAGVCYSMLDTINSRHQRVVVGVRLQQVAGRDRKVDIKPFAIQGLPMSVQPTQLVTETLNERQARVLSLAELKDKLDEMEGVQFKQFNSITDYHSLMFDLGIIARRLRSASDRSKFYRLIEASLYGGISSAITRSLRDYLLPENSGVRKAFQDMEAALRENRLTLEAIRVTQSDRDLFKHLISEATDYVAADYMRHANERRVHLDQALAFRRELYTSRKQLAAEQYKHVDMARELGEHNGAEGSLEADYQAASDHLNLVQTALRQQEKIERYEADLEELQIRFEEQNEVVAEAAEMQDENEARAEAAELEVDELKSQLADYQQALDVQQTRAIQYNQAISALARAKELCHLPDLTPESAAEWLDTFQAKEQEATEKLLSLEQKMSVAQTAHSQFEQAYQLVAAINGPLARSEAWDVARELLRDGVNQRHLAEQVQPLRMRLSELEQRLREQQEAERLLAEFCKRQGKNFDIDELEALHQELEARIASLSESVSSASEQRMALRQEQEQLQSRIQHLMQRAPVWLAAQNSLNQLSEQCGEEFTSSQEVTEYLQQLLEREREAIVERDEVGARKNAVDEEIERLSQPGGAEDQRLNALAERFGGVLLSEIYDDVSLEDAPYFSALYGPSRHAIVVPDLSQIAEQLEGLTDCPEDLYLIEGDPQSFDDSVFSVDELEKAVVVKIADRQWRYSRFPSLPIFGRAARENRIESLHAEREVLSERFATLSFDVQKTQRLHQAFSRFIGSHLSVAFEDDPEAEIRRLNGRRVELERALATHESDNQQQRLQFEQAKEGVSALNRLLPRLNLLADETLADRVDEIQERLDEAQEAARFVQQYGNQLAKLEPMVSVLQSDPEQFEQLKEDYAWSQQMQRDARQQAFALAEVVERRAHFSYSDSAEMLSGNSDLNEKLRQRLEQAEAERTRAREALRSHAAQLSQYSQVLASLKSSYDTKKELLNDLQRELQDIGVRADSGAEERARQRRDELHAQLSNNRSRRNQLEKALTFCEAEMENLTRKLRKLERDYHEMREQVVTAKAGWCAVMRMVKDNGVERRLHRRELAYLSADELRSMSDKALGALRLAVADNEHLRDVLRLSEDPKRPERKIQFFVAVYQHLRERIRQDIIRTDDPVEAIEQMEIELSRLTEELTSREQKLAISSRSVANIIRKTIQREQNRIRMLNQGLQSVSFGQVNSVRLNVNVRETHATLLDVLSEQQEQHQDLFNSNRLTFSEALAKLYQRLNPQIDMGQRTPQTIGEELLDYRNYLEMEVEVNRGSDGWLRAESGALSTGEAIGTGMSILVMVVQSWEDEARRLRGKDISPCRLLFLDEAARLDARSIATLFELCERLQMQLIIAAPENISPEKGTTYKLVRKVFQNTEHVHVVGLRGFAPQLPETLPGTQAEDTPSEAS.

ATP is bound at residue 34-41 (GGNGAGKS). Coiled coils occupy residues 326–418 (LEAD…QYNQ), 444–472 (LDTF…QTAH), and 509–602 (RHLA…QRAP). Residues 666–783 (PGGAEDQRLN…SLPIFGRAAR (118 aa)) are flexible hinge. 3 coiled-coil regions span residues 835 to 923 (EAEI…AKLE), 977 to 1116 (EMLS…AKAG), and 1209 to 1265 (VEAI…LQSV). Residues 1049–1074 (ADSGAEERARQRRDELHAQLSNNRSR) are disordered. The span at 1051–1065 (SGAEERARQRRDELH) shows a compositional bias: basic and acidic residues.

Belongs to the SMC family. MukB subfamily. Homodimerization via its hinge domain. Binds to DNA via its C-terminal region. Interacts, and probably forms a ternary complex, with MukE and MukF via its C-terminal region. The complex formation is stimulated by calcium or magnesium. Interacts with tubulin-related protein FtsZ.

Its subcellular location is the cytoplasm. It is found in the nucleoid. Plays a central role in chromosome condensation, segregation and cell cycle progression. Functions as a homodimer, which is essential for chromosome partition. Involved in negative DNA supercoiling in vivo, and by this means organize and compact chromosomes. May achieve or facilitate chromosome segregation by condensation DNA from both sides of a centrally located replisome during cell division. This chain is Chromosome partition protein MukB, found in Salmonella typhi.